The following is a 142-amino-acid chain: Nucleoside diphosphate kinase (142 aa).

ATP-binding residues include Lys-11, Phe-59, Arg-87, Thr-93, Arg-104, and Asn-114. The active-site Pros-phosphohistidine intermediate is the His-117.

Belongs to the NDK family. As to quaternary structure, homotetramer. The cofactor is Mg(2+).

It is found in the cytoplasm. The enzyme catalyses a 2'-deoxyribonucleoside 5'-diphosphate + ATP = a 2'-deoxyribonucleoside 5'-triphosphate + ADP. It catalyses the reaction a ribonucleoside 5'-diphosphate + ATP = a ribonucleoside 5'-triphosphate + ADP. Its function is as follows. Major role in the synthesis of nucleoside triphosphates other than ATP. The ATP gamma phosphate is transferred to the NDP beta phosphate via a ping-pong mechanism, using a phosphorylated active-site intermediate. This is Nucleoside diphosphate kinase from Thiobacillus denitrificans (strain ATCC 25259 / T1).